The sequence spans 463 residues: Siroheme synthase 1 (463 aa).

Residues 1–203 (MDFLPLFCQL…GQQQAAEESV (203 aa)) form a precorrin-2 dehydrogenase /sirohydrochlorin ferrochelatase region. Residues 22–23 (EV) and 43–44 (PH) each bind NAD(+). Residue serine 128 is modified to Phosphoserine. The segment at 215 to 463 (GSVTLVGAGP…YGEANTLAGV (249 aa)) is uroporphyrinogen-III C-methyltransferase. Residue proline 224 coordinates S-adenosyl-L-methionine. Aspartate 247 serves as the catalytic Proton acceptor. The active-site Proton donor is the lysine 269. S-adenosyl-L-methionine-binding positions include 300-302 (GGD), isoleucine 305, 330-331 (TA), methionine 382, and glycine 411.

This sequence in the N-terminal section; belongs to the precorrin-2 dehydrogenase / sirohydrochlorin ferrochelatase family. It in the C-terminal section; belongs to the precorrin methyltransferase family.

The enzyme catalyses uroporphyrinogen III + 2 S-adenosyl-L-methionine = precorrin-2 + 2 S-adenosyl-L-homocysteine + H(+). It carries out the reaction precorrin-2 + NAD(+) = sirohydrochlorin + NADH + 2 H(+). The catalysed reaction is siroheme + 2 H(+) = sirohydrochlorin + Fe(2+). The protein operates within cofactor biosynthesis; adenosylcobalamin biosynthesis; precorrin-2 from uroporphyrinogen III: step 1/1. It participates in cofactor biosynthesis; adenosylcobalamin biosynthesis; sirohydrochlorin from precorrin-2: step 1/1. It functions in the pathway porphyrin-containing compound metabolism; siroheme biosynthesis; precorrin-2 from uroporphyrinogen III: step 1/1. Its pathway is porphyrin-containing compound metabolism; siroheme biosynthesis; siroheme from sirohydrochlorin: step 1/1. The protein operates within porphyrin-containing compound metabolism; siroheme biosynthesis; sirohydrochlorin from precorrin-2: step 1/1. Its function is as follows. Multifunctional enzyme that catalyzes the SAM-dependent methylations of uroporphyrinogen III at position C-2 and C-7 to form precorrin-2 via precorrin-1. Then it catalyzes the NAD-dependent ring dehydrogenation of precorrin-2 to yield sirohydrochlorin. Finally, it catalyzes the ferrochelation of sirohydrochlorin to yield siroheme. This chain is Siroheme synthase 1, found in Aeromonas hydrophila subsp. hydrophila (strain ATCC 7966 / DSM 30187 / BCRC 13018 / CCUG 14551 / JCM 1027 / KCTC 2358 / NCIMB 9240 / NCTC 8049).